The chain runs to 362 residues: Peptide chain release factor 1 (362 aa).

An N5-methylglutamine modification is found at Gln-235.

It belongs to the prokaryotic/mitochondrial release factor family. Methylated by PrmC. Methylation increases the termination efficiency of RF1.

It localises to the cytoplasm. Its function is as follows. Peptide chain release factor 1 directs the termination of translation in response to the peptide chain termination codons UAG and UAA. The polypeptide is Peptide chain release factor 1 (Variovorax paradoxus (strain S110)).